The following is a 133-amino-acid chain: Profilin-1 (133 aa).

This sequence belongs to the profilin family. Occurs in many kinds of cells as a complex with monomeric actin in a 1:1 ratio. In terms of tissue distribution, ubiquitous.

It localises to the cytoplasm. Its subcellular location is the cytoskeleton. In terms of biological role, binds to actin and affects the structure of the cytoskeleton. At high concentrations, profilin prevents the polymerization of actin, whereas it enhances it at low concentrations. By binding to PIP2, it inhibits the formation of IP3 and DG. This Solanum lycopersicum (Tomato) protein is Profilin-1 (PRO1).